Reading from the N-terminus, the 245-residue chain is tRNA (guanine-N(1)-)-methyltransferase (245 aa).

Residues glycine 111 and 131 to 136 (MGDYVL) each bind S-adenosyl-L-methionine.

This sequence belongs to the RNA methyltransferase TrmD family. Homodimer.

Its subcellular location is the cytoplasm. The catalysed reaction is guanosine(37) in tRNA + S-adenosyl-L-methionine = N(1)-methylguanosine(37) in tRNA + S-adenosyl-L-homocysteine + H(+). Its function is as follows. Specifically methylates guanosine-37 in various tRNAs. The polypeptide is tRNA (guanine-N(1)-)-methyltransferase (Staphylococcus aureus (strain USA300)).